The sequence spans 598 residues: Aspartate--tRNA(Asp/Asn) ligase (598 aa).

An L-aspartate-binding site is contributed by glutamate 177. Residues 201–204 (QLFK) are aspartate. Arginine 223 lines the L-aspartate pocket. Residues 223-225 (RDE) and glutamine 232 contribute to the ATP site. Histidine 456 contacts L-aspartate. Glutamate 493 is a binding site for ATP. Arginine 500 contacts L-aspartate. Position 545–548 (545–548 (GLDR)) interacts with ATP.

It belongs to the class-II aminoacyl-tRNA synthetase family. Type 1 subfamily. As to quaternary structure, homodimer.

It localises to the cytoplasm. It catalyses the reaction tRNA(Asx) + L-aspartate + ATP = L-aspartyl-tRNA(Asx) + AMP + diphosphate. In terms of biological role, aspartyl-tRNA synthetase with relaxed tRNA specificity since it is able to aspartylate not only its cognate tRNA(Asp) but also tRNA(Asn). Reaction proceeds in two steps: L-aspartate is first activated by ATP to form Asp-AMP and then transferred to the acceptor end of tRNA(Asp/Asn). This chain is Aspartate--tRNA(Asp/Asn) ligase, found in Prochlorococcus marinus (strain AS9601).